The sequence spans 243 residues: Phomoidride biosynthesis cluster protein B (243 aa).

Belongs to the tstB family.

Functionally, phosphatidylethanolamine-binding protein; part of the gene cluster that mediates the biosynthesis of the antihypercholesterolemic agents phomoidrides which are dimeric anhydrides. Within the pathway, tstB is not essential for dimerization and its function has still to be determined. The pathway begins with the highly reducing polyketide synthase tstA that catalyzes the formation of a C12-fatty acyl-ACP, starting from one acetate and 5 malonate units. The hydrolase tstM is involved in the release of the C12-fatty acyl chain from phiA. The alkylcitrate synthase (ACS) tstJ and the alkylcitrate dehydratase (ACDH) tstI then give rise to decarboxylated monomeric anhydrides by coupling the C12-fatty acyl chain with oxalacetic acid. The cyclase tstC is responsible for the dimerization of the monomeric anhydrides which leads to the production of prephomoidride that contains the characteristic bicyclo[4.3.1]deca-1,6-diene system of phomoidrides. Iterative oxidation catalyzed by the alpha-ketoglutarate-dependent dioxygenase tstK produced then phomoidride A. Finally, the methyltransferase tstE converts phomoidride A to phomoidride B via an acetalization reaction. The phosphatidylethanolamine-binding protein tstB and tstN are not essential for dimerization and their functions have still to be determined. This Talaromyces stipitatus (strain ATCC 10500 / CBS 375.48 / QM 6759 / NRRL 1006) (Penicillium stipitatum) protein is Phomoidride biosynthesis cluster protein B.